Here is a 397-residue protein sequence, read N- to C-terminus: Protochlorophyllide reductase, chloroplastic (397 aa).

Residues 1–57 (MALTMSAKSVSARAQVSSKAQAAPAVAVSGRTSSRVMPAPALAARSSVARTPLVVCA) constitute a chloroplast transit peptide.

Belongs to the short-chain dehydrogenases/reductases (SDR) family. POR subfamily.

The protein localises to the plastid. It is found in the chloroplast. It catalyses the reaction chlorophyllide a + NADP(+) = protochlorophyllide a + NADPH + H(+). It functions in the pathway porphyrin-containing compound metabolism; chlorophyll biosynthesis. Its function is as follows. Phototransformation of protochlorophyllide (Pchlide) to chlorophyllide (Chlide). In Chlamydomonas reinhardtii (Chlamydomonas smithii), this protein is Protochlorophyllide reductase, chloroplastic (PORA).